The following is a 135-amino-acid chain: Interleukin-4 (135 aa).

An N-terminal signal peptide occupies residues 1 to 24; sequence MGLTSQLIPALVCLLVCTSHFVHG. Disulfide bonds link Cys-27-Cys-135, Cys-48-Cys-85, and Cys-70-Cys-105. 2 N-linked (GlcNAc...) asparagine glycosylation sites follow: Asn-62 and Asn-96.

Belongs to the IL-4/IL-13 family.

It localises to the secreted. Functionally, participates in at least several B-cell activation processes as well as of other cell types. It is a costimulator of DNA-synthesis. It induces the expression of class II MHC molecules on resting B-cells. It enhances both secretion and cell surface expression of IgE and IgG1. It also regulates the expression of the low affinity Fc receptor for IgE (CD23) on both lymphocytes and monocytes. Positively regulates IL31RA expression in macrophages. Stimulates autophagy in dendritic cells by interfering with mTORC1 signaling and through the induction of RUFY4. In Capra hircus (Goat), this protein is Interleukin-4 (IL4).